The sequence spans 572 residues: Dihydroxy-acid dehydratase (572 aa).

C54 is a binding site for [2Fe-2S] cluster. D86 provides a ligand contact to Mg(2+). Position 127 (C127) interacts with [2Fe-2S] cluster. Positions 128 and 129 each coordinate Mg(2+). K129 bears the N6-carboxylysine mark. Position 199 (C199) interacts with [2Fe-2S] cluster. E449 contacts Mg(2+). S475 (proton acceptor) is an active-site residue.

The protein belongs to the IlvD/Edd family. In terms of assembly, homodimer. [2Fe-2S] cluster serves as cofactor. Mg(2+) is required as a cofactor.

The catalysed reaction is (2R)-2,3-dihydroxy-3-methylbutanoate = 3-methyl-2-oxobutanoate + H2O. It carries out the reaction (2R,3R)-2,3-dihydroxy-3-methylpentanoate = (S)-3-methyl-2-oxopentanoate + H2O. Its pathway is amino-acid biosynthesis; L-isoleucine biosynthesis; L-isoleucine from 2-oxobutanoate: step 3/4. It participates in amino-acid biosynthesis; L-valine biosynthesis; L-valine from pyruvate: step 3/4. Functionally, functions in the biosynthesis of branched-chain amino acids. Catalyzes the dehydration of (2R,3R)-2,3-dihydroxy-3-methylpentanoate (2,3-dihydroxy-3-methylvalerate) into 2-oxo-3-methylpentanoate (2-oxo-3-methylvalerate) and of (2R)-2,3-dihydroxy-3-methylbutanoate (2,3-dihydroxyisovalerate) into 2-oxo-3-methylbutanoate (2-oxoisovalerate), the penultimate precursor to L-isoleucine and L-valine, respectively. This chain is Dihydroxy-acid dehydratase, found in Pelagibacter ubique (strain HTCC1062).